A 142-amino-acid chain; its full sequence is Large ribosomal subunit protein uL11 (142 aa).

It belongs to the universal ribosomal protein uL11 family. Part of the ribosomal stalk of the 50S ribosomal subunit. Interacts with L10 and the large rRNA to form the base of the stalk. L10 forms an elongated spine to which L12 dimers bind in a sequential fashion forming a multimeric L10(L12)X complex. One or more lysine residues are methylated.

Functionally, forms part of the ribosomal stalk which helps the ribosome interact with GTP-bound translation factors. The protein is Large ribosomal subunit protein uL11 of Shewanella loihica (strain ATCC BAA-1088 / PV-4).